A 179-amino-acid polypeptide reads, in one-letter code: Large ribosomal subunit protein uL10 (179 aa).

The protein belongs to the universal ribosomal protein uL10 family. Part of the ribosomal stalk of the 50S ribosomal subunit. The N-terminus interacts with L11 and the large rRNA to form the base of the stalk. The C-terminus forms an elongated spine to which L12 dimers bind in a sequential fashion forming a multimeric L10(L12)X complex.

In terms of biological role, forms part of the ribosomal stalk, playing a central role in the interaction of the ribosome with GTP-bound translation factors. The polypeptide is Large ribosomal subunit protein uL10 (Mycolicibacterium gilvum (strain PYR-GCK) (Mycobacterium gilvum (strain PYR-GCK))).